The chain runs to 201 residues: Recombination protein RecR (201 aa).

The C4-type zinc-finger motif lies at 57-72 (CADCRTFTEQEVCNIC). Residues 81–176 (GQICVVESPA…EASRIAHGVP (96 aa)) enclose the Toprim domain.

This sequence belongs to the RecR family.

May play a role in DNA repair. It seems to be involved in an RecBC-independent recombinational process of DNA repair. It may act with RecF and RecO. This chain is Recombination protein RecR, found in Shigella boydii serotype 18 (strain CDC 3083-94 / BS512).